The following is a 339-amino-acid chain: Uroporphyrinogen decarboxylase (339 aa).

Substrate is bound by residues 21–25 (RQAGR), Asp-71, Tyr-147, Ser-202, and His-315.

The protein belongs to the uroporphyrinogen decarboxylase family. In terms of assembly, homodimer.

It is found in the cytoplasm. It catalyses the reaction uroporphyrinogen III + 4 H(+) = coproporphyrinogen III + 4 CO2. Its pathway is porphyrin-containing compound metabolism; protoporphyrin-IX biosynthesis; coproporphyrinogen-III from 5-aminolevulinate: step 4/4. Catalyzes the decarboxylation of four acetate groups of uroporphyrinogen-III to yield coproporphyrinogen-III. This Helicobacter pylori (strain HPAG1) protein is Uroporphyrinogen decarboxylase.